Reading from the N-terminus, the 490-residue chain is DNA-binding protein D-ETS-3 (490 aa).

Disordered regions lie at residues 190 to 255 (TASS…SGGG) and 271 to 294 (SSTQ…SQLR). Residues 196–207 (HVEHKVRADKST) are compositionally biased toward basic and acidic residues. The span at 211 to 227 (ATTSSHAAAPSSSSSAS) shows a compositional bias: low complexity. Residues 244 to 255 (GTGGGASASGGG) show a composition bias toward gly residues. The span at 271–280 (SSTQSQGYSS) shows a compositional bias: low complexity. Residues 317-397 (IQLWQFLLEL…HGKRYAYKFD (81 aa)) constitute a DNA-binding region (ETS).

Belongs to the ETS family. In terms of tissue distribution, embryonic ventral nervous system, higher in the thoracic than abdominal segments.

The protein localises to the nucleus. The protein is DNA-binding protein D-ETS-3 (Ets65A) of Drosophila melanogaster (Fruit fly).